A 155-amino-acid chain; its full sequence is Large ribosomal subunit protein uL22c (155 aa).

It belongs to the universal ribosomal protein uL22 family. Part of the 50S ribosomal subunit.

The protein localises to the plastid. The protein resides in the chloroplast. In terms of biological role, this protein binds specifically to 23S rRNA. Functionally, the globular domain of the protein is located near the polypeptide exit tunnel on the outside of the subunit, while an extended beta-hairpin is found that lines the wall of the exit tunnel in the center of the 70S ribosome. This chain is Large ribosomal subunit protein uL22c (rpl22), found in Coffea arabica (Arabian coffee).